The primary structure comprises 129 residues: Sulfurtransferase TusD (129 aa).

Cys-79 acts as the Cysteine persulfide intermediate in catalysis.

Belongs to the DsrE/TusD family. As to quaternary structure, heterohexamer, formed by a dimer of trimers. The hexameric TusBCD complex contains 2 copies each of TusB, TusC and TusD. The TusBCD complex interacts with TusE.

The protein localises to the cytoplasm. In terms of biological role, part of a sulfur-relay system required for 2-thiolation of 5-methylaminomethyl-2-thiouridine (mnm(5)s(2)U) at tRNA wobble positions. Accepts sulfur from TusA and transfers it in turn to TusE. This chain is Sulfurtransferase TusD, found in Serratia proteamaculans (strain 568).